We begin with the raw amino-acid sequence, 289 residues long: Phospholipase A1 (289 aa).

Positions Met-1–Ala-20 are cleaved as a signal peptide. Over Gln-21 to Leu-52 the chain is Periplasmic. Residues Tyr-53–Thr-65 form a beta stranded membrane-spanning segment. The Extracellular segment spans residues Ser-66–Lys-84. A beta stranded transmembrane segment spans residues Asp-85 to Arg-99. Residues Gly-100–Asn-105 lie on the Periplasmic side of the membrane. Residues Ser-106–Trp-118 traverse the membrane as a beta stranded segment. At Gln-119–Pro-128 the chain is on the extracellular side. Ser-126 contributes to the Ca(2+) binding site. Residues Phe-129–Phe-148 form a beta stranded membrane-spanning segment. Residues Ala-149 to Gly-150 are Periplasmic-facing. The beta stranded transmembrane segment at Trp-151–Ser-164 threads the bilayer. His-162 serves as the catalytic Proton acceptor. Ser-164 acts as the Nucleophile in catalysis. Residues Asn-165–Arg-173 lie on the Extracellular side of the membrane. Ca(2+)-binding residues include Arg-167 and Ser-172. A beta stranded membrane pass occupies residues Ser-174–Asn-186. Topologically, residues Gly-187–Asn-188 are periplasmic. Residues Trp-189 to Val-198 form a beta stranded membrane-spanning segment. Residues Ile-199–Gln-216 are Extracellular-facing. Asp-204 is a Ca(2+) binding site. The beta stranded transmembrane segment at Leu-217–Leu-223 threads the bilayer. At Gly-224 to Glu-225 the chain is on the periplasmic side. The beta stranded transmembrane segment at Ala-226–Tyr-234 threads the bilayer. The Extracellular segment spans residues Asn-235–Gly-241. Residues Gly-242–Pro-250 form a beta stranded membrane-spanning segment. Residues Val-251–Val-255 lie on the Periplasmic side of the membrane. A beta stranded membrane pass occupies residues Arg-256–Tyr-265. The Extracellular segment spans residues Gly-266–Phe-274. The chain crosses the membrane as a beta stranded span at residues Asn-275–Asn-286. The Periplasmic portion of the chain corresponds to Asp-287–Phe-289.

This sequence belongs to the phospholipase A1 family. As to quaternary structure, homodimer; dimerization is reversible, and the dimeric form is the active one. Ca(2+) is required as a cofactor.

The protein localises to the cell outer membrane. The enzyme catalyses a 1,2-diacyl-sn-glycero-3-phosphocholine + H2O = a 2-acyl-sn-glycero-3-phosphocholine + a fatty acid + H(+). It carries out the reaction a 1,2-diacyl-sn-glycero-3-phosphocholine + H2O = a 1-acyl-sn-glycero-3-phosphocholine + a fatty acid + H(+). Functionally, hydrolysis of phosphatidylcholine with phospholipase A2 (EC 3.1.1.4) and phospholipase A1 (EC 3.1.1.32) activities. This chain is Phospholipase A1 (pldA), found in Salmonella typhi.